Reading from the N-terminus, the 300-residue chain is Bifunctional protein FolD (300 aa).

NADP(+) contacts are provided by residues 168-170 (GRS), S193, and I234.

This sequence belongs to the tetrahydrofolate dehydrogenase/cyclohydrolase family. In terms of assembly, homodimer.

The enzyme catalyses (6R)-5,10-methylene-5,6,7,8-tetrahydrofolate + NADP(+) = (6R)-5,10-methenyltetrahydrofolate + NADPH. It carries out the reaction (6R)-5,10-methenyltetrahydrofolate + H2O = (6R)-10-formyltetrahydrofolate + H(+). It participates in one-carbon metabolism; tetrahydrofolate interconversion. In terms of biological role, catalyzes the oxidation of 5,10-methylenetetrahydrofolate to 5,10-methenyltetrahydrofolate and then the hydrolysis of 5,10-methenyltetrahydrofolate to 10-formyltetrahydrofolate. The polypeptide is Bifunctional protein FolD (Ehrlichia canis (strain Jake)).